A 155-amino-acid polypeptide reads, in one-letter code: Deoxyuridine 5'-triphosphate nucleotidohydrolase (155 aa).

Substrate is bound by residues 74 to 76 (RSG), asparagine 87, and 91 to 93 (LID).

The protein belongs to the dUTPase family. Mg(2+) is required as a cofactor.

It carries out the reaction dUTP + H2O = dUMP + diphosphate + H(+). It participates in pyrimidine metabolism; dUMP biosynthesis; dUMP from dCTP (dUTP route): step 2/2. This enzyme is involved in nucleotide metabolism: it produces dUMP, the immediate precursor of thymidine nucleotides and it decreases the intracellular concentration of dUTP so that uracil cannot be incorporated into DNA. The protein is Deoxyuridine 5'-triphosphate nucleotidohydrolase of Xylella fastidiosa (strain M23).